The chain runs to 287 residues: ATP synthase gamma chain (287 aa).

Belongs to the ATPase gamma chain family. In terms of assembly, F-type ATPases have 2 components, CF(1) - the catalytic core - and CF(0) - the membrane proton channel. CF(1) has five subunits: alpha(3), beta(3), gamma(1), delta(1), epsilon(1). CF(0) has three main subunits: a, b and c.

It is found in the cell inner membrane. Produces ATP from ADP in the presence of a proton gradient across the membrane. The gamma chain is believed to be important in regulating ATPase activity and the flow of protons through the CF(0) complex. This chain is ATP synthase gamma chain, found in Parabacteroides distasonis (strain ATCC 8503 / DSM 20701 / CIP 104284 / JCM 5825 / NCTC 11152).